The chain runs to 423 residues: UPF0229 protein PFLU_5583 (423 aa).

Positions 64-109 (LHHGRGGKQTVVHPGNKEFTTGEHIQRPQGGGGGKGPGKAGNSGEG) are disordered. Residues 92–107 (QGGGGGKGPGKAGNSG) are compositionally biased toward gly residues.

It belongs to the UPF0229 family.

The polypeptide is UPF0229 protein PFLU_5583 (Pseudomonas fluorescens (strain SBW25)).